A 360-amino-acid polypeptide reads, in one-letter code: Phospho-N-acetylmuramoyl-pentapeptide-transferase (360 aa).

10 consecutive transmembrane segments (helical) span residues threonine 26 to glutamine 46, glycine 70 to tryptophan 90, tyrosine 97 to tyrosine 117, alanine 132 to alanine 152, valine 168 to serine 188, glycine 199 to threonine 219, alanine 236 to phenylalanine 256, valine 263 to valine 283, leucine 288 to valine 308, and valine 338 to lysine 358.

The protein belongs to the glycosyltransferase 4 family. MraY subfamily. Mg(2+) is required as a cofactor.

The protein resides in the cell inner membrane. The enzyme catalyses UDP-N-acetyl-alpha-D-muramoyl-L-alanyl-gamma-D-glutamyl-meso-2,6-diaminopimeloyl-D-alanyl-D-alanine + di-trans,octa-cis-undecaprenyl phosphate = di-trans,octa-cis-undecaprenyl diphospho-N-acetyl-alpha-D-muramoyl-L-alanyl-D-glutamyl-meso-2,6-diaminopimeloyl-D-alanyl-D-alanine + UMP. Its pathway is cell wall biogenesis; peptidoglycan biosynthesis. Functionally, catalyzes the initial step of the lipid cycle reactions in the biosynthesis of the cell wall peptidoglycan: transfers peptidoglycan precursor phospho-MurNAc-pentapeptide from UDP-MurNAc-pentapeptide onto the lipid carrier undecaprenyl phosphate, yielding undecaprenyl-pyrophosphoryl-MurNAc-pentapeptide, known as lipid I. This Alkalilimnicola ehrlichii (strain ATCC BAA-1101 / DSM 17681 / MLHE-1) protein is Phospho-N-acetylmuramoyl-pentapeptide-transferase.